Reading from the N-terminus, the 292-residue chain is Polyamine aminopropyltransferase 1 (292 aa).

A PABS domain is found at Met-1 to Asp-244. Gln-35 serves as a coordination point for S-methyl-5'-thioadenosine. The spermidine site is built by His-66 and Glu-90. Residues Asp-110 and Asp-142–Gly-143 contribute to the S-methyl-5'-thioadenosine site. Asp-163 (proton acceptor) is an active-site residue.

Belongs to the spermidine/spermine synthase family. As to quaternary structure, homodimer or homotetramer.

It localises to the cytoplasm. The enzyme catalyses norspermine + S-adenosyl 3-(methylsulfanyl)propylamine = caldopentamine + S-methyl-5'-thioadenosine + 2 H(+). The catalysed reaction is norspermidine + S-adenosyl 3-(methylsulfanyl)propylamine = norspermine + S-methyl-5'-thioadenosine + H(+). It catalyses the reaction S-adenosyl 3-(methylsulfanyl)propylamine + spermidine = thermospermine + S-methyl-5'-thioadenosine + H(+). Its function is as follows. Involved in the biosynthesis of polyamines which are thought to support the growth of thermophilic microorganisms under high-temperature conditions. It seems that long-chain and branched-chain of polyamines effectively stabilize DNA and RNA, respectively. Catalyzes the irreversible transfer of a propylamine group from the amino donor S-adenosylmethioninamine (decarboxy-AdoMet) to norspermidine, spermidine and norspermine to yield norspermine, thermospermine and caldopentamine, respectively. It can also synthesize sym-norspermidine (bis(3-aminopropyl)amine) from 1,3-diaminopropane with a very low activity. The biosynthesis of caldohexamine and caldoheptamine from caldopentamine has been also observed. This Hyperthermus butylicus (strain DSM 5456 / JCM 9403 / PLM1-5) protein is Polyamine aminopropyltransferase 1.